Here is a 160-residue protein sequence, read N- to C-terminus: Ribosome-binding factor A (160 aa).

Basic and acidic residues predominate over residues 112-122 (KARQSDEKVRE). Residues 112-160 (KARQSDEKVREASAGATYAGEADPYRKPDEDETDTEGAVEADETDDTAK) form a disordered region. The span at 141 to 160 (EDETDTEGAVEADETDDTAK) shows a compositional bias: acidic residues.

Belongs to the RbfA family. As to quaternary structure, monomer. Binds 30S ribosomal subunits, but not 50S ribosomal subunits or 70S ribosomes.

The protein resides in the cytoplasm. Its function is as follows. One of several proteins that assist in the late maturation steps of the functional core of the 30S ribosomal subunit. Associates with free 30S ribosomal subunits (but not with 30S subunits that are part of 70S ribosomes or polysomes). Required for efficient processing of 16S rRNA. May interact with the 5'-terminal helix region of 16S rRNA. This is Ribosome-binding factor A from Streptomyces coelicolor (strain ATCC BAA-471 / A3(2) / M145).